The sequence spans 325 residues: Bifunctional nuclease 2 (325 aa).

Residues 119–254 enclose the BFN domain; it reads CVHNNSQGRN…SLAYSDGIRS (136 aa). The 36-residue stretch at 285 to 320 folds into the UVR domain; the sequence is EAQEFGLIRNMLIAAVEERYKDAATWRDKLMLLRSK.

This sequence belongs to the bifunctional nuclease family.

It is found in the nucleus. Functionally, bifunctional nuclease with both RNase and DNase activities. Involved in basal defense response. Participates in abscisic acid-derived callose deposition following infection by a necrotrophic pathogen. In Oryza sativa subsp. japonica (Rice), this protein is Bifunctional nuclease 2 (BBD2).